Reading from the N-terminus, the 171-residue chain is Adenine phosphoribosyltransferase (171 aa).

Belongs to the purine/pyrimidine phosphoribosyltransferase family. As to quaternary structure, homodimer.

The protein localises to the cytoplasm. The enzyme catalyses AMP + diphosphate = 5-phospho-alpha-D-ribose 1-diphosphate + adenine. Its pathway is purine metabolism; AMP biosynthesis via salvage pathway; AMP from adenine: step 1/1. Catalyzes a salvage reaction resulting in the formation of AMP, that is energically less costly than de novo synthesis. This Ruminiclostridium cellulolyticum (strain ATCC 35319 / DSM 5812 / JCM 6584 / H10) (Clostridium cellulolyticum) protein is Adenine phosphoribosyltransferase.